Reading from the N-terminus, the 347-residue chain is Phenylalanine--tRNA ligase alpha subunit (347 aa).

Mg(2+) is bound at residue Glu265.

It belongs to the class-II aminoacyl-tRNA synthetase family. Phe-tRNA synthetase alpha subunit type 1 subfamily. Tetramer of two alpha and two beta subunits. The cofactor is Mg(2+).

The protein resides in the cytoplasm. The enzyme catalyses tRNA(Phe) + L-phenylalanine + ATP = L-phenylalanyl-tRNA(Phe) + AMP + diphosphate + H(+). The protein is Phenylalanine--tRNA ligase alpha subunit of Mycolicibacterium vanbaalenii (strain DSM 7251 / JCM 13017 / BCRC 16820 / KCTC 9966 / NRRL B-24157 / PYR-1) (Mycobacterium vanbaalenii).